The sequence spans 1166 residues: Myosin-1 (1166 aa).

Residues 1-13 show a composition bias toward polar residues; sequence MSQKVTPFMQSLK. The tract at residues 1-71 is disordered; sequence MSQKVTPFMQ…AGDSEDSPYS (71 aa). The residue at position 14 (S14) is a Phosphoserine. The segment covering 32-45 has biased composition (polar residues); the sequence is NSSGASVRLTNSNV. The Myosin N-terminal SH3-like domain maps to 112-161; it reads KKILQSWIQLPNGNWELGKILSTSGEESVISLPEGKVIKVISETLVPANP. The region spanning 165-837 is the Myosin motor domain; that stretch reads DGVDDLMQLS…QIGVLEDTRN (673 aa). Residues 256-263 and 304-312 each bind ATP; these read GESGAGKT and NDNSSRFGK. Actin-binding stretches follow at residues 589–623 and 717–739; these read LFEK…KQHL and LFQL…KPNN. 4 IQ domains span residues 839–868, 862–891, 888–917, and 911–940; these read TLHG…GISI, LKRG…RHKA, RHKA…ASVV, and IADA…LKSG. Residues 955–1005 adopt a coiled-coil conformation; it reads SVLSELQRRVLKAEAALREKEEENDILQQRLQQYENRWSEYETKMKSMEEI. A disordered region spans residues 1030 to 1065; that stretch reads ARNSDASVNASDATDWDSSSNQFRSQTSNGVGSRLQ. A compositionally biased stretch (polar residues) spans 1032 to 1060; that stretch reads NSDASVNASDATDWDSSSNQFRSQTSNGV.

This sequence belongs to the TRAFAC class myosin-kinesin ATPase superfamily. Myosin family. Plant myosin class VIII subfamily. As to quaternary structure, homodimer.

The protein localises to the cell junction. It is found in the plasmodesma. It localises to the cytoplasm. Its subcellular location is the cytoskeleton. The protein resides in the phragmoplast. The protein localises to the endosome. It is found in the endoplasmic reticulum. Myosin heavy chain that is required for the cell cycle-regulated transport of various organelles and proteins for their segregation. Functions by binding with its tail domain to receptor proteins on organelles and exerting force with its N-terminal motor domain against actin filaments, thereby transporting its cargo along polarized actin cables. Involved in endocytosis via its action in endosomal trafficking. In Arabidopsis thaliana (Mouse-ear cress), this protein is Myosin-1 (VIII-1).